Here is an 88-residue protein sequence, read N- to C-terminus: Toxin RelE2 (88 aa).

This sequence belongs to the RelE toxin family.

Toxic component of a type II toxin-antitoxin (TA) system. Its toxic effect is neutralized by coexpression with cognate antitoxin RelB2 but no other ParD or RelB antitoxin. The sequence is that of Toxin RelE2 (relE2) from Caulobacter vibrioides (strain ATCC 19089 / CIP 103742 / CB 15) (Caulobacter crescentus).